We begin with the raw amino-acid sequence, 96 residues long: Large ribosomal subunit protein uL23 (96 aa).

The protein belongs to the universal ribosomal protein uL23 family. In terms of assembly, part of the 50S ribosomal subunit. Contacts protein L29, and trigger factor when it is bound to the ribosome.

One of the early assembly proteins it binds 23S rRNA. One of the proteins that surrounds the polypeptide exit tunnel on the outside of the ribosome. Forms the main docking site for trigger factor binding to the ribosome. In Nitratidesulfovibrio vulgaris (strain ATCC 29579 / DSM 644 / CCUG 34227 / NCIMB 8303 / VKM B-1760 / Hildenborough) (Desulfovibrio vulgaris), this protein is Large ribosomal subunit protein uL23.